Here is a 578-residue protein sequence, read N- to C-terminus: Cytochrome P450 monooxygenase fsoE (578 aa).

Residues Leu28–Trp48 form a helical membrane-spanning segment. Cys517 provides a ligand contact to heme.

It belongs to the cytochrome P450 family. Heme serves as cofactor.

Its subcellular location is the membrane. It catalyses the reaction 3-O-(beta-D-glucopyranosyl)-isomotiol + 2 reduced [NADPH--hemoprotein reductase] + 2 O2 = 2-deacetoxyfuscoatroside + 2 oxidized [NADPH--hemoprotein reductase] + 2 H2O + 3 H(+). The catalysed reaction is 3-O-(beta-D-glucopyranosyl)-2alpha-hydroxyisomotiol + 2 reduced [NADPH--hemoprotein reductase] + 2 O2 = 2-deacetylfuscoatroside + 2 oxidized [NADPH--hemoprotein reductase] + 2 H2O + 3 H(+). It carries out the reaction 3-O-(beta-D-glucopyranosyl)-2alpha-acetoxyisomotiol + 2 reduced [NADPH--hemoprotein reductase] + 2 O2 = fuscoatroside + 2 oxidized [NADPH--hemoprotein reductase] + 2 H2O + 3 H(+). The enzyme catalyses isomotiol + reduced [NADPH--hemoprotein reductase] + O2 = 19beta-hydroxyisomotiol + oxidized [NADPH--hemoprotein reductase] + H2O + H(+). It catalyses the reaction 2alpha-hydroxyisomotiol + reduced [NADPH--hemoprotein reductase] + O2 = 2alpha,19beta-dihydroxyisomotiol + oxidized [NADPH--hemoprotein reductase] + H2O + H(+). The catalysed reaction is 2alpha,19beta-dihydroxyisomotiol + reduced [NADPH--hemoprotein reductase] + O2 = 2alpha-hydroxyismotiol-19-one + oxidized [NADPH--hemoprotein reductase] + 2 H2O + H(+). It carries out the reaction 2alpha-hydroxyismotiol-19-one + 2 reduced [NADPH--hemoprotein reductase] + O2 = 2-deacetyl,3-deglucopyranosyl-fuscoatroside + 2 oxidized [NADPH--hemoprotein reductase] + H2O + 3 H(+). Its pathway is secondary metabolite biosynthesis; terpenoid biosynthesis. Its function is as follows. Cytochrome P450 monooxygenase; part of the gene cluster that mediates the biosynthesis of the enfumafungin-type antibiotic, fuscoatroside. Within the pathway, fsoE catalyzes the oxidative cleavage of the c19-C20 bond within the E-ring, resulting in the formation of a carboxyl group and a methyl group. FsoE exhibits preferential substrate selectivity toward glycoside substrates over their aglycones. The fuscoatroside biosynthesis is initiated by the cyclization of 2,3(S)-oxidosqualene through FsoA's terpene cyclase (TC) domain, leading to the formation of the fernane skeleton isomotiol, harboring a fernane triterpene skeleton with a C8-C9 double bond. Subsequently, C2-alpha-hydroxylation mediated by fsoD results in the production of 2-alpha-hydroxy-isomotiol, which is further acetylated by fsoF. The glycosyltransferase (GT) domain of FsoA may convert isomotiol, 2-alpha-hydroxy-isomotiol, and the acetylated derivative of 2-alpha-hydroxy-isomotiol into their corresponding glycosides 3-O-(beta-D-glucopyranosyl)-isomotiol, 3-O-(beta-D-glucopyranosyl)-2-alpha-hydroxy-isomotiol, and 3-O-(beta-D-glucopyranosyl)-2-alpha-acetoxy-isomotiol, which then undergo oxidative cleavage under the action of fsoE to form s 2-deacetoxy-fuscoatroside, 2-deacetyl-fuscoatroside, and fuscoatroside, respectively. Although hydroxylation followed by acetylation of 3-O-(beta-D-glucopyranosyl)-isomotiol and 2-deacetoxy-fuscoatroside by fsoD and fsoF could not be ruled out, this process is likely to occur with difficulty due to bulky steric hindrance caused by the presence of a glycan at C3 in these compounds. Interestingly, fsoE can also utilize the aglycones isomotiol and 2-alpha-hydroxy-isomotiol as substrates to generate 19-beta-hydroxy-isomotiol and 2-alpha,19-beta-dihydroxy-isomotiol, respectively. These reactions occur with lower efficiency. Finally, fsoE can further convert 2-alpha,19-beta-dihydroxy-isomotiol into 2-alpha-hydroxy-ismotiol-19-one and 2-alpha-hydroxy-ismotiol-19-one into 2-deacetyl-3-deglucopyranosyl-fuscoatroside. The sequence is that of Cytochrome P450 monooxygenase fsoE from Humicola fuscoatra.